The following is a 411-amino-acid chain: Putative competence-damage inducible protein (411 aa).

It belongs to the CinA family.

This Caldicellulosiruptor saccharolyticus (strain ATCC 43494 / DSM 8903 / Tp8T 6331) protein is Putative competence-damage inducible protein.